Here is a 303-residue protein sequence, read N- to C-terminus: Ribosomal RNA small subunit methyltransferase H (303 aa).

S-adenosyl-L-methionine is bound by residues 33-35 (GGH), D52, F78, D99, and Q106.

This sequence belongs to the methyltransferase superfamily. RsmH family.

The protein resides in the cytoplasm. The catalysed reaction is cytidine(1402) in 16S rRNA + S-adenosyl-L-methionine = N(4)-methylcytidine(1402) in 16S rRNA + S-adenosyl-L-homocysteine + H(+). Functionally, specifically methylates the N4 position of cytidine in position 1402 (C1402) of 16S rRNA. The polypeptide is Ribosomal RNA small subunit methyltransferase H (Phytoplasma australiense).